Here is a 245-residue protein sequence, read N- to C-terminus: Terpene cyclase ausL (245 aa).

Transmembrane regions (helical) follow at residues 17–37, 51–71, 76–96, 113–133, 138–158, 170–190, and 206–226; these read ILAISEVLKVVAAVGWSVNYI, IGILPLCCDIGWEFVYAWMFP, HWQGVVRVWFFLHSAVLLVTL, IVFIYIFVTIVFGAGQYALAA, ALGFHWGGALCQFLSSSGGIA, SYLIWFARAISTFAGFIKLCI, and MCWFYIVTVLSFDAAYPFLYF.

It belongs to the paxB family.

It is found in the membrane. Its pathway is secondary metabolite biosynthesis; terpenoid biosynthesis. Functionally, terpene cyclase; part of the gene cluster A that mediates the biosynthesis of the fungal meroterpenoid acetoxydehydroaustin. The first step of the pathway is the synthesis of 3,5-dimethylorsellinic acid by the polyketide synthase ausA. 3,5-dimethylorsellinic acid is then prenylated by the polyprenyl transferase ausN. Further epoxidation by the FAD-dependent monooxygenase ausM and cyclization by the probable terpene cyclase ausL lead to the formation of protoaustinoid A. Protoaustinoid A is then oxidized to spiro-lactone preaustinoid A3 by the combined action of the FAD-binding monooxygenases ausB and ausC, and the dioxygenase ausE. Acid-catalyzed keto-rearrangement and ring contraction of the tetraketide portion of preaustinoid A3 by ausJ lead to the formation of preaustinoid A4. The aldo-keto reductase ausK, with the help of ausH, is involved in the next step by transforming preaustinoid A4 into isoaustinone which is in turn hydroxylated by the P450 monooxygenase ausI to form austinolide. The cytochrome P450 monooxygenase ausG then modifies austinolide to austinol. Austinol is further acetylated to austin by the O-acetyltransferase ausP, which spontaneously changes to dehydroaustin. The cytochrome P450 monooxygenase then converts dehydroaustin is into 7-dehydrodehydroaustin. The hydroxylation catalyzed by ausR permits the second O-acetyltransferase ausQ to add an additional acetyl group to the molecule, leading to the formation of acetoxydehydroaustin. Due to genetic rearrangements of the clusters and the subsequent loss of some enzymes, the end product of the Penicillium brasilianum austinoid biosynthesis clusters is acetoxydehydroaustin. This is Terpene cyclase ausL from Penicillium brasilianum.